Consider the following 157-residue polypeptide: 3-hydroxyacyl-[acyl-carrier-protein] dehydratase FabZ (157 aa).

His-58 is an active-site residue.

It belongs to the thioester dehydratase family. FabZ subfamily.

Its subcellular location is the cytoplasm. The catalysed reaction is a (3R)-hydroxyacyl-[ACP] = a (2E)-enoyl-[ACP] + H2O. Involved in unsaturated fatty acids biosynthesis. Catalyzes the dehydration of short chain beta-hydroxyacyl-ACPs and long chain saturated and unsaturated beta-hydroxyacyl-ACPs. This Brucella ovis (strain ATCC 25840 / 63/290 / NCTC 10512) protein is 3-hydroxyacyl-[acyl-carrier-protein] dehydratase FabZ.